A 301-amino-acid polypeptide reads, in one-letter code: uncharacterized protein (301 aa).

The protein belongs to the asfivirus E301R family. In terms of assembly, interacts with host IRF3.

Functionally, plays a role in the inhibition of host innate immune system by acting as a negatively regulator of type I interferon production. Mechanistically, interacts with and prevents host IRF3 nuclear localization to inhibit its transcriptional activity. This is an uncharacterized protein from African swine fever virus (isolate Tick/South Africa/Pretoriuskop Pr4/1996) (ASFV).